The primary structure comprises 783 residues: DNA repair and recombination protein RAD54-like (783 aa).

Positions 2 to 9 are required for chromatin remodeling, strand pairing activities and coupling of ATPase activity; that stretch reads RRSLAPSQ. Residue Thr22 is modified to Phosphothreonine. One can recognise a Helicase ATP-binding domain in the interval 165-340; it reads EGKRGNFNGC…FSLVNFVNPE (176 aa). 178 to 185 serves as a coordination point for ATP; the sequence is DEMGLGKT. A DEGH box motif is present at residues 291 to 294; sequence DEGH. The Helicase C-terminal domain maps to 497–654; the sequence is LLDFMLAAIR…NNESSEKHFT (158 aa). The interval 737–783 is disordered; the sequence is AESKPAAITEDDESEQQQQSPKRTSKNDDNDEDFDPENSAEEQFLGF. The segment covering 765 to 776 has biased composition (acidic residues); it reads DNDEDFDPENSA.

This sequence belongs to the SNF2/RAD54 helicase family. As to quaternary structure, interacts (via N-terminus) with spn-A/Rad51.

It is found in the nucleus. Its function is as follows. Involved in mitotic DNA repair and meiotic recombination. Functions in the recombinational DNA repair pathway. Essential for interhomolog gene conversion (GC), but may have a less important role in intersister GC than spn-A/Rad51. In the presence of DNA, spn-A/Rad51 enhances the ATPase activity of okr/Rad54. The sequence is that of DNA repair and recombination protein RAD54-like from Drosophila mojavensis (Fruit fly).